Consider the following 461-residue polypeptide: MALHEPPSKLNRHSHSNLLKPPSLNKPILTFADNDCLKTPTMNDMLKTPTVNSPRHTPMNIDGTPKVNGFSGFTPQTDQKFFGEHEPLFNQMHTTTLMPAPSSSYKEPAYSSEQPSSSSDEAKPKELLGSNSFGVPRMTNGNSKQKPEELTLKDIEISSTGPGGVDSPGLSAAMFQFSPMVEHFLQNLTNKAGLPELVVDSKTAGLNHQEPSDLIKSVQVRRSSIEDQKFSDVLHVPTLPRKTSEPSHLGSSLQNEHPQSNSRPSTVIPRVQRTNTSASLTRSMDHSSMSPISAHDDPYSNSASYSSLSTHTSFSDSASLAHFEPKTEPMDDYSYNFSDNDFNSFEFSSTSEELKNIGCQKMKSSKMPLQDRPYKCPRDGCDRRFSRSDELTRHIRIHTGQKPFQCRICMRAFSRSDHLTTHVRTHTGEKPFSCDICGRKFARSDERKRHTKVHKTSRSGS.

3 disordered regions span residues 1-25 (MALHEPPSKLNRHSHSNLLKPPSLN), 96-152 (TLMP…ELTL), and 232-308 (DVLH…YSSL). Composition is skewed to polar residues over residues 96–105 (TLMPAPSSSY), 129–144 (GSNSFGVPRMTNGNSK), 249–265 (LGSSLQNEHPQSNSRPS), and 272–291 (QRTNTSASLTRSMDHSSMSP). The segment covering 299–308 (YSNSASYSSL) has biased composition (low complexity). 3 C2H2-type zinc fingers span residues 374–398 (YKCPRDGCDRRFSRSDELTRHIRIH), 404–426 (FQCRICMRAFSRSDHLTTHVRTH), and 432–454 (FSCDICGRKFARSDERKRHTKVH).

It belongs to the EGR C2H2-type zinc-finger protein family. As to expression, expressed in sheath cells and distal tip cells of the somatic gonad, as well as in the intestine and sperm (at protein level). Expression not observed in oocytes (at protein level).

It localises to the nucleus. The protein resides in the cytoplasm. The protein localises to the perinuclear region. Sequence-specific DNA-binding transcription factor. Plays a role in oocyte development, acting cell-autonomously in the somatic gonad. Involved in negative regulation of oocyte MAPK activation and inhibits oocyte maturation and ovulation. The protein is Early growth response factor homolog 1 of Caenorhabditis elegans.